The following is a 213-amino-acid chain: Ribonuclease HII (213 aa).

In terms of domain architecture, RNase H type-2 spans 1-206 (MICGVDEAGK…VSTLLAKKTQ (206 aa)). A divalent metal cation-binding residues include D6, E7, and D101.

It belongs to the RNase HII family. Mn(2+) serves as cofactor. The cofactor is Mg(2+).

The protein resides in the cytoplasm. It carries out the reaction Endonucleolytic cleavage to 5'-phosphomonoester.. Functionally, endonuclease that specifically degrades the RNA of RNA-DNA hybrids. The polypeptide is Ribonuclease HII (Methanoregula boonei (strain DSM 21154 / JCM 14090 / 6A8)).